A 372-amino-acid chain; its full sequence is Protein Wnt-1 (372 aa).

An N-terminal signal peptide occupies residues 1-29; the sequence is MLKSTQVILIFILLISIVESLSWLALGLA. Disulfide bonds link Cys77–Cys88, Cys130–Cys138, and Cys140–Cys158. Asn87 carries N-linked (GlcNAc...) asparagine glycosylation. N-linked (GlcNAc...) asparagine glycosylation occurs at Asn187. 8 cysteine pairs are disulfide-bonded: Cys225–Cys239, Cys227–Cys234, Cys301–Cys332, Cys317–Cys327, Cys331–Cys371, Cys347–Cys362, Cys349–Cys359, and Cys354–Cys355. The O-palmitoleoyl serine; by mom-1 moiety is linked to residue Ser231.

It belongs to the Wnt family. In terms of processing, palmitoleoylation is required for efficient binding to frizzled receptors. Depalmitoleoylation leads to Wnt signaling pathway inhibition. Expressed in intestine, some head neurons and ventral nerve cord and pharyngeal neurons. Expressed in the tail and weakly expressed in the vulva and body wall muscles. Expressed highly in posterior dorsal and ventral muscle cells.

Its subcellular location is the secreted. The protein localises to the extracellular space. It localises to the extracellular matrix. It is found in the cytoplasm. The protein resides in the cell membrane. Ligand for members of the frizzled family of seven transmembrane receptors. Probable developmental protein. May be a signaling molecule which affects the development of discrete regions of tissues. Is likely to signal over only few cell diameters. Binds receptor tyrosine kinase cam-1. Together with Wnt ligand cwn-2, regulates the migration of CAN, ALM, BDU and HSN neurons during embryogenesis, the migration of QL and QR neuroblast descendants during larval development, and polarity of ALM neurons. Also acts with the Wnt ligand egl-20 to direct HSN neuron migration. Acts through the Wnt receptor cfz-2 to direct ALM migration. Also plays a role in axon growth and guidance in HSN and male CP neurons. In addition, together with Wnt ligand cwn-2, negatively regulates developmental neurite pruning of AIM neurons probably by acting as a ligand for receptor tyrosine kinase cam-1. Probably by activating the Wnt/Frizzled pathway, may regulate vulva development. May act redundantly with other Wnt ligands such as cwn-2 and mom-2 to control seam cell polarity. The chain is Protein Wnt-1 (cwn-1) from Caenorhabditis elegans.